Reading from the N-terminus, the 541-residue chain is Propionate catabolism operon regulatory protein (541 aa).

One can recognise a Sigma-54 factor interaction domain in the interval 221–464 (IRGQSPQMEQ…RNMMERLALF (244 aa)). Residue 321 to 330 (AHGGTLFLDE) participates in ATP binding. Residues 513 to 532 (KTAAARYLGISRTTLWRRLK) constitute a DNA-binding region (H-T-H motif).

Its function is as follows. Involved in the transcriptional regulation of the propionate catabolism operon. The sequence is that of Propionate catabolism operon regulatory protein (prpR) from Salmonella typhimurium (strain LT2 / SGSC1412 / ATCC 700720).